Reading from the N-terminus, the 163-residue chain is Aspartate carbamoyltransferase regulatory chain (163 aa).

Zn(2+) is bound by residues Cys-113, Cys-118, Cys-143, and Cys-146.

This sequence belongs to the PyrI family. In terms of assembly, contains catalytic and regulatory chains. Zn(2+) serves as cofactor.

Functionally, involved in allosteric regulation of aspartate carbamoyltransferase. This is Aspartate carbamoyltransferase regulatory chain from Caldivirga maquilingensis (strain ATCC 700844 / DSM 13496 / JCM 10307 / IC-167).